The following is a 1243-amino-acid chain: Tau-tubulin kinase 2 (1243 aa).

The Protein kinase domain occupies tryptophan 21 to isoleucine 284. ATP is bound by residues isoleucine 27–isoleucine 35 and lysine 50. The active-site Proton acceptor is the aspartate 141. The residue at position 445 (serine 445) is a Phosphoserine. Residues valine 674–serine 683 are compositionally biased toward polar residues. 2 disordered regions span residues valine 674–leucine 695 and threonine 737–aspartate 761. Serine 786 carries the post-translational modification Phosphoserine. Positions glutamine 1063–glycine 1086 are disordered. The segment covering leucine 1073–arginine 1084 has biased composition (pro residues). At serine 1102 the chain carries Phosphoserine. Polar residues predominate over residues glutamine 1115–serine 1129. Residues glutamine 1115 to arginine 1243 are disordered. Low complexity-rich tracts occupy residues valine 1144 to alanine 1170, serine 1187 to serine 1202, and serine 1227 to arginine 1243.

Belongs to the protein kinase superfamily. CK1 Ser/Thr protein kinase family. Interacts with CEP164. Interacts with MCRS1; the interaction is required for recruitment of TTBK2 to the mother centriole.

The protein resides in the cell projection. It localises to the cilium. The protein localises to the cytoplasm. Its subcellular location is the cytoskeleton. It is found in the cilium basal body. The protein resides in the microtubule organizing center. It localises to the centrosome. The protein localises to the centriole. Its subcellular location is the cytosol. It is found in the nucleus. The enzyme catalyses L-seryl-[protein] + ATP = O-phospho-L-seryl-[protein] + ADP + H(+). It catalyses the reaction L-threonyl-[protein] + ATP = O-phospho-L-threonyl-[protein] + ADP + H(+). Functionally, serine/threonine kinase that acts as a key regulator of ciliogenesis: controls the initiation of ciliogenesis by binding to the distal end of the basal body and promoting the removal of CCP110, which caps the mother centriole, leading to the recruitment of IFT proteins, which build the ciliary axoneme. Has some substrate preference for proteins that are already phosphorylated on a Tyr residue at the +2 position relative to the phosphorylation site. Able to phosphorylate tau on serines in vitro. Phosphorylates MPHOSPH9 which promotes its ubiquitination and proteasomal degradation, loss of MPHOSPH9 facilitates the removal of the CP110-CEP97 complex (a negative regulator of ciliogenesis) from the mother centrioles, promoting the initiation of ciliogenesis. Required for recruitment of CPLANE2 and INTU to the mother centriole. In Mus musculus (Mouse), this protein is Tau-tubulin kinase 2 (Ttbk2).